The primary structure comprises 133 residues: Cytochrome c-554 (133 aa).

Gln1 is subject to Pyrrolidone carboxylic acid. The heme c site is built by Met17, Cys122, Cys125, and His126.

Binds 1 heme c group covalently per subunit.

Its subcellular location is the periplasm. In terms of biological role, monoheme c-type cytochrome, that is particularly expressed when cells generate energy via aerobic respiration. This Cereibacter sphaeroides (Rhodobacter sphaeroides) protein is Cytochrome c-554 (cycF).